The primary structure comprises 120 residues: Cell division topological specificity factor (120 aa).

The interval 93–120 (LNSCEGENPQQDPGAAPSEGGHLSSPSP) is disordered.

It belongs to the MinE family.

In terms of biological role, prevents the cell division inhibition by proteins MinC and MinD at internal division sites while permitting inhibition at polar sites. This ensures cell division at the proper site by restricting the formation of a division septum at the midpoint of the long axis of the cell. The protein is Cell division topological specificity factor of Synechococcus sp. (strain JA-3-3Ab) (Cyanobacteria bacterium Yellowstone A-Prime).